Consider the following 179-residue polypeptide: MAKLHDYYKDEVVAKLMTEFNYNSVMQVPRVEKITLNMGVGEAIADKKLLDNAAADLTAISGQKPLITKARKSVAGFKIRQGYPIGCKVTLRGERMWEFFERLITIAVPRIRDFRGLSAKSFDGRGNYSMGVREQIIFPEIDYDKVDRVRGLDITITTTAKSDEEGRALLAAFDFPFRK.

The protein belongs to the universal ribosomal protein uL5 family. In terms of assembly, part of the 50S ribosomal subunit; part of the 5S rRNA/L5/L18/L25 subcomplex. Contacts the 5S rRNA and the P site tRNA. Forms a bridge to the 30S subunit in the 70S ribosome.

Functionally, this is one of the proteins that bind and probably mediate the attachment of the 5S RNA into the large ribosomal subunit, where it forms part of the central protuberance. In the 70S ribosome it contacts protein S13 of the 30S subunit (bridge B1b), connecting the 2 subunits; this bridge is implicated in subunit movement. Contacts the P site tRNA; the 5S rRNA and some of its associated proteins might help stabilize positioning of ribosome-bound tRNAs. The sequence is that of Large ribosomal subunit protein uL5 from Klebsiella pneumoniae (strain 342).